We begin with the raw amino-acid sequence, 282 residues long: Ribosomal RNA small subunit methyltransferase A (282 aa).

S-adenosyl-L-methionine-binding residues include N28, L30, G55, E77, D103, and N123.

This sequence belongs to the class I-like SAM-binding methyltransferase superfamily. rRNA adenine N(6)-methyltransferase family. RsmA subfamily.

The protein localises to the cytoplasm. The enzyme catalyses adenosine(1518)/adenosine(1519) in 16S rRNA + 4 S-adenosyl-L-methionine = N(6)-dimethyladenosine(1518)/N(6)-dimethyladenosine(1519) in 16S rRNA + 4 S-adenosyl-L-homocysteine + 4 H(+). Specifically dimethylates two adjacent adenosines (A1518 and A1519) in the loop of a conserved hairpin near the 3'-end of 16S rRNA in the 30S particle. May play a critical role in biogenesis of 30S subunits. The chain is Ribosomal RNA small subunit methyltransferase A from Afipia carboxidovorans (strain ATCC 49405 / DSM 1227 / KCTC 32145 / OM5) (Oligotropha carboxidovorans).